A 414-amino-acid chain; its full sequence is Sensor protein CutS (414 aa).

The segment covering 1–15 has biased composition (pro residues); sequence MATTPAPPGAPPKPT. The disordered stretch occupies residues 1-21; that stretch reads MATTPAPPGAPPKPTWDPRSA. 2 helical membrane passes run 37 to 57 and 121 to 141; these read LLYG…IYLL and SLLA…AMAG. An HAMP domain is found at 142–194; that stretch reads RVLSPLGRITRTARAVAGSDLSRRIELDGPDDELKELADTFDDMLERLQRAFT. The Histidine kinase domain maps to 202-414; the sequence is NASHELRTPL…GLVMRVTLPV (213 aa). Residue histidine 205 is modified to Phosphohistidine; by autocatalysis.

The protein localises to the cell membrane. The enzyme catalyses ATP + protein L-histidine = ADP + protein N-phospho-L-histidine.. Its function is as follows. Member of the two-component regulatory system CutS/CutR, involved in the regulation of copper metabolism. This is Sensor protein CutS (cutS) from Streptomyces coelicolor (strain ATCC BAA-471 / A3(2) / M145).